A 118-amino-acid chain; its full sequence is DNA-binding protein inhibitor ID-3 (118 aa).

In terms of domain architecture, bHLH spans 32–84 (SHKGPGVDEPMGLLYDMNGCYSKLKELVPGIPQGSKLSQVEILQHVIDYIFDL).

In terms of assembly, homodimer. Heterodimer with other HLH proteins. Interacts (via HLH domain) with the bHLH protein hes4/hairy2 (via Orange domain). Interacts with stat3.

It localises to the nucleus. In terms of biological role, transcriptional regulator (lacking a basic DNA binding domain) which negatively regulates the basic helix-loop-helix (bHLH) transcription factors by forming heterodimers and inhibiting their DNA binding and transcriptional activity. Influences cell fate decisions in the embryo by sequestering and blocking the activity of the bHLH transcription factors that control these decisions. Inhibits the binding of myogenic bHLH-containing complexes to E-box DNA, thereby preventing activation of muscle-specific target genes. Also inhibits the activity of neurogenic factor neurod1/neuroD. Plays a role in cell cycle progression and survival of neural crest progenitors; binding to either hes4-B/hairy2b or stat3 blocks the formation of transcription factor complexes and the repressor function of hes4-B/hairy2B, to allow neural crest progenitors to differentiate. May play a role in the regulation of the circadian rhythm. This chain is DNA-binding protein inhibitor ID-3 (id3), found in Xenopus tropicalis (Western clawed frog).